Consider the following 339-residue polypeptide: Fructose-1,6-bisphosphatase isozyme 2 (339 aa).

Residues 3–10 are important for interaction with ALDOA; it reads DRSPFETD. AMP-binding positions include V18 and 28 to 32; that span reads TGELT. Residues D69 and E98 each contribute to the Mg(2+) site. 113-114 is a binding site for AMP; the sequence is KY. Mg(2+)-binding residues include D119, L121, and D122. D122 contacts substrate. AMP is bound at residue R141. Residues 204–208 carry the Nuclear localization signal motif; the sequence is KKKGK. Substrate is bound at residue 213 to 216; it reads NEGY. Phosphotyrosine occurs at positions 216 and 219. Substrate contacts are provided by residues 245-249, Y265, and K275; that span reads YVGSM. A Mg(2+)-binding site is contributed by E281.

It belongs to the FBPase class 1 family. In terms of assembly, homotetramer. Interacts with ALDOA; the interaction blocks inhibition by physiological concentrations of AMP and reduces inhibition by Ca(2+). Interacts with alpha-actinin and F-actin. The cofactor is Mg(2+).

It is found in the cell junction. Its subcellular location is the cytoplasm. It localises to the nucleus. The protein localises to the myofibril. The protein resides in the sarcomere. It is found in the z line. It carries out the reaction beta-D-fructose 1,6-bisphosphate + H2O = beta-D-fructose 6-phosphate + phosphate. It participates in carbohydrate biosynthesis; gluconeogenesis. Its activity is regulated as follows. Subject to complex allosteric regulation. The enzyme can assume an active R-state, or an inactive T-state. Intermediate conformations may exist. AMP acts as an allosteric inhibitor. Fructose 2,6-bisphosphate acts as a competitive inhibitor. Strongly inhibited by Ca(2+). Catalyzes the hydrolysis of fructose 1,6-bisphosphate to fructose 6-phosphate in the presence of divalent cations and probably participates in glycogen synthesis from carbohydrate precursors, such as lactate. This Bos taurus (Bovine) protein is Fructose-1,6-bisphosphatase isozyme 2 (FBP2).